The following is a 61-amino-acid chain: ATP synthase subunit J, mitochondrial (61 aa).

The chain crosses the membrane as a helical span at residues 13–32; sequence LVKYYWPFFVGFGLTFYGVA.

In terms of assembly, F-type ATP synthases have 2 components, the catalytic core F(1) and the membrane-embedded component F(0), linked together by a central stalk and a peripheral stalk. The central stalk, also called rotor shaft, is often seen as part of F(1). The peripheral stalk is seen as part of F(0). F(0) contains the membrane channel next to the rotor. F-type ATP synthases form dimers but each monomer functions independently in ATP generation. The dimer consists of 18 different polypeptides: ATP1 (subunit alpha, part of F(1), 3 molecules per monomer), ATP2 (subunit beta, part of F(1), 3 molecules per monomer), ATP3 (subunit gamma, part of the central stalk), ATP4 (subunit b, part of the peripheral stalk), ATP5/OSCP (subunit 5/OSCP, part of the peripheral stalk), ATP6 (subunit a, part of the peripheral stalk), ATP7 (subunit d, part of the peripheral stalk), ATP8 (subunit 8, part of the peripheral stalk), OLI1 (subunit c, part of the rotor, 10 molecules per monomer), ATP14 (subunit h, part of the peripheral stalk), ATP15 (subunit epsilon, part of the central stalk), ATP16 (subunit delta, part of the central stalk), ATP17 (subunit f, part of the peripheral stalk), ATP18 (subunit i/j, part of the peripheral stalk). Dimer-specific subunits are ATP19 (subunit k, at interface between monomers), ATP20 (subunit g, at interface between monomers), TIM11 (subunit e, at interface between monomers). Also contains subunit L.

The protein resides in the mitochondrion inner membrane. In terms of biological role, mitochondrial membrane ATP synthase (F(1)F(0) ATP synthase or Complex V) produces ATP from ADP in the presence of a proton gradient across the membrane which is generated by electron transport complexes of the respiratory chain. F-type ATP synthases consist of two structural domains, F(1) - containing the extramembraneous catalytic core, and F(0) - containing the membrane proton channel, linked together by a central stalk and a peripheral stalk. During catalysis, ATP synthesis in the catalytic domain of F(1) is coupled via a rotary mechanism of the central stalk subunits to proton translocation. Part of the complex F(0) domain. Minor subunit located with subunit a/ATP6 in the membrane. The sequence is that of ATP synthase subunit J, mitochondrial from Pichia angusta (Yeast).